An 866-amino-acid chain; its full sequence is Glycoprotein gp2 (866 aa).

An N-terminal signal peptide occupies residues 1 to 25 (MGFIYARKLLLCMAVSIYAIGSTTT). Disordered regions lie at residues 24–185 (TTTE…TDTT) and 319–619 (TAAT…IVPQ). Asparagine 48 is a glycosylation site (N-linked (GlcNAc...) asparagine; by host). Over residues 319 to 442 (TAATTTAATT…PDSSTGSTST (124 aa)) the composition is skewed to low complexity. Positions 443-463 (AEPSSTFTLTPSTATPSTDQF) are enriched in polar residues. Composition is skewed to low complexity over residues 464 to 499 (TGSS…EAST) and 514 to 526 (TPDG…NTTP). A glycan (N-linked (GlcNAc...) asparagine; by host) is linked at asparagine 518. Over residues 535–561 (FADTQQTPDNGVSTQHTTINDHTTANA) the composition is skewed to polar residues. Basic residues predominate over residues 564–574 (HAGHHRGRAGG). 2 N-linked (GlcNAc...) asparagine; by host glycosylation sites follow: asparagine 611 and asparagine 659. Residues 835-855 (FALVAATTLTVTILCLLCCLY) form a helical membrane-spanning segment.

Its subcellular location is the virion membrane. In terms of biological role, virulence factor. The polypeptide is Glycoprotein gp2 (Equus caballus (Horse)).